A 503-amino-acid chain; its full sequence is Angiopoietin-4 (503 aa).

Positions 1–24 (MLSQLAMLQGSLLLVVATMSVAQQ) are cleaved as a signal peptide. Residues 84–238 (TQQVKQLEQA…RQSAALTNIE (155 aa)) adopt a coiled-coil conformation. N96, N126, N140, N158, N247, N274, N311, N337, and N427 each carry an N-linked (GlcNAc...) asparagine glycan. Residues 282-502 (MAGEQVFQDC…ASRMMIRPLD (221 aa)) enclose the Fibrinogen C-terminal domain. C291 and C320 are joined by a disulfide. The cysteines at positions 444 and 457 are disulfide-linked.

Homodimer; disulfide-linked. Interacts with TEK/TIE2. Highly expressed in the lung with much lower levels found in other tissues.

It localises to the secreted. Binds to TEK/TIE2, modulating ANGPT1 signaling. Can induce tyrosine phosphorylation of TEK/TIE2. Promotes endothelial cell survival, migration and angiogenesis. The polypeptide is Angiopoietin-4 (ANGPT4) (Homo sapiens (Human)).